The sequence spans 331 residues: Serine/threonine-protein phosphatase PP1 isozyme 7 (331 aa).

Met1 carries the post-translational modification N-acetylmethionine. Residues Asp60, His62, Asp88, and Asn120 each contribute to the Mn(2+) site. His121 serves as the catalytic Proton donor. His169 and His244 together coordinate Mn(2+).

This sequence belongs to the PPP phosphatase family. PP-1 subfamily. The cofactor is Mn(2+). Expressed in roots, rosettes and flowers.

It is found in the nucleus. Its subcellular location is the cytoplasm. The catalysed reaction is O-phospho-L-seryl-[protein] + H2O = L-seryl-[protein] + phosphate. The enzyme catalyses O-phospho-L-threonyl-[protein] + H2O = L-threonyl-[protein] + phosphate. Phosphatase activity is strongly reduced by the protein phosphatase inhibitor 2 (I-2). Its function is as follows. Serine/threonine-protein phosphatase that possesses phosphatase activity toward para-nitrophenyl phosphate (pNPP) in vitro. The protein is Serine/threonine-protein phosphatase PP1 isozyme 7 of Arabidopsis thaliana (Mouse-ear cress).